Here is a 322-residue protein sequence, read N- to C-terminus: GTP 3',8-cyclase (322 aa).

A Radical SAM core domain is found at 5–217 (SYGRVIDYLR…NIIAQKYSFK (213 aa)). GTP is bound at residue Arg-14. Residues Cys-21 and Cys-25 each coordinate [4Fe-4S] cluster. Tyr-27 serves as a coordination point for S-adenosyl-L-methionine. Cys-28 lines the [4Fe-4S] cluster pocket. A GTP-binding site is contributed by Arg-64. S-adenosyl-L-methionine is bound at residue Gly-68. GTP is bound at residue Thr-95. S-adenosyl-L-methionine is bound at residue Ser-119. Lys-155 is a binding site for GTP. Met-189 contacts S-adenosyl-L-methionine. Residues Cys-249 and Cys-252 each coordinate [4Fe-4S] cluster. 254–256 (RIR) contributes to the GTP binding site. Position 266 (Cys-266) interacts with [4Fe-4S] cluster.

It belongs to the radical SAM superfamily. MoaA family. In terms of assembly, monomer and homodimer. [4Fe-4S] cluster is required as a cofactor.

It catalyses the reaction GTP + AH2 + S-adenosyl-L-methionine = (8S)-3',8-cyclo-7,8-dihydroguanosine 5'-triphosphate + 5'-deoxyadenosine + L-methionine + A + H(+). It functions in the pathway cofactor biosynthesis; molybdopterin biosynthesis. In terms of biological role, catalyzes the cyclization of GTP to (8S)-3',8-cyclo-7,8-dihydroguanosine 5'-triphosphate. This is GTP 3',8-cyclase from Campylobacter lari (strain RM2100 / D67 / ATCC BAA-1060).